A 753-amino-acid chain; its full sequence is Polyribonucleotide nucleotidyltransferase (753 aa).

Mg(2+) is bound by residues Asp523 and Asp529. In terms of domain architecture, KH spans 589-648 (PRIISVRIPVDKIGAVIGPKGAMINQIQDDTGADITIEDDGTVLIGATDGASAEAARSAV). Residues 660-732 (GERYLGTVVK…DRGKLSLSPV (73 aa)) form the S1 motif domain. The tract at residues 733–753 (GAESDAVAETADAIESSQTEA) is disordered.

The protein belongs to the polyribonucleotide nucleotidyltransferase family. Mg(2+) serves as cofactor.

The protein resides in the cytoplasm. It catalyses the reaction RNA(n+1) + phosphate = RNA(n) + a ribonucleoside 5'-diphosphate. Involved in mRNA degradation. Catalyzes the phosphorolysis of single-stranded polyribonucleotides processively in the 3'- to 5'-direction. This Micrococcus luteus (strain ATCC 4698 / DSM 20030 / JCM 1464 / CCM 169 / CCUG 5858 / IAM 1056 / NBRC 3333 / NCIMB 9278 / NCTC 2665 / VKM Ac-2230) (Micrococcus lysodeikticus) protein is Polyribonucleotide nucleotidyltransferase.